The primary structure comprises 166 residues: Large ribosomal subunit protein uL10 (166 aa).

Belongs to the universal ribosomal protein uL10 family. Part of the ribosomal stalk of the 50S ribosomal subunit. The N-terminus interacts with L11 and the large rRNA to form the base of the stalk. The C-terminus forms an elongated spine to which L12 dimers bind in a sequential fashion forming a multimeric L10(L12)X complex.

Its function is as follows. Forms part of the ribosomal stalk, playing a central role in the interaction of the ribosome with GTP-bound translation factors. The protein is Large ribosomal subunit protein uL10 of Shewanella sediminis (strain HAW-EB3).